A 387-amino-acid polypeptide reads, in one-letter code: 1-deoxy-D-xylulose 5-phosphate reductoisomerase (387 aa).

Thr-10, Gly-11, Ser-12, Val-13, Asn-38, and Asn-119 together coordinate NADPH. Residue Lys-120 coordinates 1-deoxy-D-xylulose 5-phosphate. NADPH is bound at residue Glu-121. Residue Asp-145 coordinates Mn(2+). Residues Ser-146, Glu-147, Ser-170, and His-193 each coordinate 1-deoxy-D-xylulose 5-phosphate. Glu-147 is a Mn(2+) binding site. Gly-199 is a binding site for NADPH. Ser-206, Asn-211, Lys-212, and Glu-215 together coordinate 1-deoxy-D-xylulose 5-phosphate. Glu-215 serves as a coordination point for Mn(2+).

This sequence belongs to the DXR family. Requires Mg(2+) as cofactor. Mn(2+) serves as cofactor.

It catalyses the reaction 2-C-methyl-D-erythritol 4-phosphate + NADP(+) = 1-deoxy-D-xylulose 5-phosphate + NADPH + H(+). Its pathway is isoprenoid biosynthesis; isopentenyl diphosphate biosynthesis via DXP pathway; isopentenyl diphosphate from 1-deoxy-D-xylulose 5-phosphate: step 1/6. Functionally, catalyzes the NADPH-dependent rearrangement and reduction of 1-deoxy-D-xylulose-5-phosphate (DXP) to 2-C-methyl-D-erythritol 4-phosphate (MEP). This is 1-deoxy-D-xylulose 5-phosphate reductoisomerase from Wolbachia pipientis wMel.